The chain runs to 378 residues: Cysteine synthase (378 aa).

Positions 10–31 are disordered; the sequence is NSEGDSNQQQNNNNNSNNNLKE. The span at 15-28 shows a compositional bias: low complexity; sequence SNQQQNNNNNSNNN. Lys-79 carries the post-translational modification N6-(pyridoxal phosphate)lysine. Pyridoxal 5'-phosphate is bound by residues 215–219 and Ser-319; that span reads GTGGT.

It belongs to the cysteine synthase/cystathionine beta-synthase family. Pyridoxal 5'-phosphate serves as cofactor.

The enzyme catalyses O-acetyl-L-serine + hydrogen sulfide = L-cysteine + acetate. The protein operates within amino-acid biosynthesis; L-cysteine biosynthesis; L-cysteine from L-serine: step 2/2. This Dictyostelium discoideum (Social amoeba) protein is Cysteine synthase (cysK).